A 311-amino-acid chain; its full sequence is Porphobilinogen deaminase (311 aa).

The residue at position 241 (C241) is an S-(dipyrrolylmethanemethyl)cysteine.

Belongs to the HMBS family. As to quaternary structure, monomer. It depends on dipyrromethane as a cofactor.

The catalysed reaction is 4 porphobilinogen + H2O = hydroxymethylbilane + 4 NH4(+). The protein operates within porphyrin-containing compound metabolism; protoporphyrin-IX biosynthesis; coproporphyrinogen-III from 5-aminolevulinate: step 2/4. Tetrapolymerization of the monopyrrole PBG into the hydroxymethylbilane pre-uroporphyrinogen in several discrete steps. This chain is Porphobilinogen deaminase, found in Campylobacter curvus (strain 525.92).